The sequence spans 400 residues: Lysophospholipid transporter LplT (400 aa).

12 consecutive transmembrane segments (helical) span residues 19 to 39, 53 to 73, 91 to 111, 139 to 159, 164 to 184, 195 to 213, 227 to 247, 257 to 277, 281 to 301, 304 to 324, 352 to 372, and 373 to 393; these read VIVAQFLSAFGDNALLFATLA, VLQMVFVGAYILFAPFVGQIA, AGAAGICLGVNPFVGYTLVGI, LMEASTIAAILLGSVAGGVLA, IAALVACALAYAGAVAANLFI, SWRLSAMTRSFFCACVVLW, LFWGAGVTLRFLLVLWVPVAL, YLNAMVAVGIVVGAGAAAKLV, TVSRCMPAGILIGVVVAIFSL, ALLPAYALLLLIGMLGGFFVV, NSAMLLMLGLYSLAVLVGVPA, and VAIGIGFGVLFALAIAALWIW.

The protein belongs to the major facilitator superfamily. LplT (TC 2.A.1.42) family.

The protein localises to the cell inner membrane. Catalyzes the facilitated diffusion of 2-acyl-glycero-3-phosphoethanolamine (2-acyl-GPE) into the cell. The polypeptide is Lysophospholipid transporter LplT (Salmonella typhi).